A 31-amino-acid chain; its full sequence is Cytochrome b6-f complex subunit 8 (31 aa).

A helical transmembrane segment spans residues 5–25 (IVSMAWAALMVVFTFSLSLVI).

It belongs to the PetN family. In terms of assembly, the 4 large subunits of the cytochrome b6-f complex are cytochrome b6, subunit IV (17 kDa polypeptide, PetD), cytochrome f and the Rieske protein, while the 4 small subunits are PetG, PetL, PetM and PetN. The complex functions as a dimer.

The protein resides in the plastid membrane. Its function is as follows. Component of the cytochrome b6-f complex, which mediates electron transfer between photosystem II (PSII) and photosystem I (PSI), cyclic electron flow around PSI, and state transitions. The protein is Cytochrome b6-f complex subunit 8 of Cuscuta gronovii (Common dodder).